A 347-amino-acid chain; its full sequence is Protein-glutamate methylesterase/protein-glutamine glutaminase 3 (347 aa).

The Response regulatory domain maps to 3–120 (QVFIVDDSAV…KNFLEESEIL (118 aa)). Position 54 is a 4-aspartylphosphate (Asp-54). The 189-residue stretch at 159 to 347 (IDTTDKLIAI…SKIVGEVQYF (189 aa)) folds into the CheB-type methylesterase domain. Catalysis depends on residues Ser-171, His-197, and Asp-293.

This sequence belongs to the CheB family. Phosphorylated by CheA. Phosphorylation of the N-terminal regulatory domain activates the methylesterase activity.

Its subcellular location is the cytoplasm. The enzyme catalyses [protein]-L-glutamate 5-O-methyl ester + H2O = L-glutamyl-[protein] + methanol + H(+). The catalysed reaction is L-glutaminyl-[protein] + H2O = L-glutamyl-[protein] + NH4(+). Involved in chemotaxis. Part of a chemotaxis signal transduction system that modulates chemotaxis in response to various stimuli. Catalyzes the demethylation of specific methylglutamate residues introduced into the chemoreceptors (methyl-accepting chemotaxis proteins or MCP) by CheR. Also mediates the irreversible deamidation of specific glutamine residues to glutamic acid. This is Protein-glutamate methylesterase/protein-glutamine glutaminase 3 from Leptospira interrogans serogroup Icterohaemorrhagiae serovar copenhageni (strain Fiocruz L1-130).